A 497-amino-acid chain; its full sequence is ATP synthase subunit alpha 2 (497 aa).

167-174 provides a ligand contact to ATP; it reads GERATGKT.

Belongs to the ATPase alpha/beta chains family. F-type ATPases have 2 components, CF(1) - the catalytic core - and CF(0) - the membrane proton channel. CF(1) has five subunits: alpha(3), beta(3), gamma(1), delta(1), epsilon(1). CF(0) has four main subunits: a(1), b(1), b'(1) and c(9-12).

The protein resides in the cell inner membrane. The enzyme catalyses ATP + H2O + 4 H(+)(in) = ADP + phosphate + 5 H(+)(out). Its function is as follows. Produces ATP from ADP in the presence of a proton gradient across the membrane. The alpha chain is a regulatory subunit. In Cereibacter sphaeroides (strain ATCC 17029 / ATH 2.4.9) (Rhodobacter sphaeroides), this protein is ATP synthase subunit alpha 2.